A 442-amino-acid chain; its full sequence is tRNA modification GTPase MnmE (442 aa).

(6S)-5-formyl-5,6,7,8-tetrahydrofolate is bound by residues Arg21, Glu79, and Lys118. A TrmE-type G domain is found at Gly214 to Asn367. Asn224 provides a ligand contact to K(+). GTP-binding positions include Asn224–Ser229, Ser243–Thr249, and Asp268–Gly271. Residue Ser228 participates in Mg(2+) binding. K(+)-binding residues include Ser243, Ile245, and Thr248. Thr249 is a Mg(2+) binding site. Lys442 is a (6S)-5-formyl-5,6,7,8-tetrahydrofolate binding site.

This sequence belongs to the TRAFAC class TrmE-Era-EngA-EngB-Septin-like GTPase superfamily. TrmE GTPase family. As to quaternary structure, homodimer. Heterotetramer of two MnmE and two MnmG subunits. Requires K(+) as cofactor.

The protein resides in the cytoplasm. Functionally, exhibits a very high intrinsic GTPase hydrolysis rate. Involved in the addition of a carboxymethylaminomethyl (cmnm) group at the wobble position (U34) of certain tRNAs, forming tRNA-cmnm(5)s(2)U34. The protein is tRNA modification GTPase MnmE of Campylobacter jejuni subsp. doylei (strain ATCC BAA-1458 / RM4099 / 269.97).